The following is a 177-amino-acid chain: ATP synthase subunit delta (177 aa).

Belongs to the ATPase delta chain family. F-type ATPases have 2 components, F(1) - the catalytic core - and F(0) - the membrane proton channel. F(1) has five subunits: alpha(3), beta(3), gamma(1), delta(1), epsilon(1). F(0) has three main subunits: a(1), b(2) and c(10-14). The alpha and beta chains form an alternating ring which encloses part of the gamma chain. F(1) is attached to F(0) by a central stalk formed by the gamma and epsilon chains, while a peripheral stalk is formed by the delta and b chains.

The protein localises to the cell inner membrane. Its function is as follows. F(1)F(0) ATP synthase produces ATP from ADP in the presence of a proton or sodium gradient. F-type ATPases consist of two structural domains, F(1) containing the extramembraneous catalytic core and F(0) containing the membrane proton channel, linked together by a central stalk and a peripheral stalk. During catalysis, ATP synthesis in the catalytic domain of F(1) is coupled via a rotary mechanism of the central stalk subunits to proton translocation. Functionally, this protein is part of the stalk that links CF(0) to CF(1). It either transmits conformational changes from CF(0) to CF(1) or is implicated in proton conduction. This is ATP synthase subunit delta from Aliivibrio salmonicida (strain LFI1238) (Vibrio salmonicida (strain LFI1238)).